The sequence spans 122 residues: UPF0382 membrane protein SAB0533 (122 aa).

4 helical membrane passes run 3 to 23, 46 to 66, 69 to 89, and 98 to 118; these read LFII…AFGA, MYHG…SINV, AGWL…ILVL, and ITPI…IATF.

The protein belongs to the UPF0382 family.

It localises to the cell membrane. The chain is UPF0382 membrane protein SAB0533 from Staphylococcus aureus (strain bovine RF122 / ET3-1).